Here is a 149-residue protein sequence, read N- to C-terminus: 16.9 kDa class I heat shock protein 3 (149 aa).

Residues Asp-35–Gly-149 enclose the sHSP domain.

It belongs to the small heat shock protein (HSP20) family. May form oligomeric structures.

The protein localises to the cytoplasm. This Oryza sativa subsp. japonica (Rice) protein is 16.9 kDa class I heat shock protein 3 (HSP16.9C).